A 668-amino-acid chain; its full sequence is Protein ENTREP3 (668 aa).

3 consecutive transmembrane segments (helical) span residues 34–54, 67–87, and 91–111; these read LLTL…FSMV, SCPS…IVSW, and FTLV…LSMA. The N-linked (GlcNAc...) asparagine glycan is linked to Asn160. The helical transmembrane segment at 174-194 threads the bilayer; sequence LFSVCGLTICAAIICTLSAIV. Phosphoserine is present on residues Ser358 and Ser389. Disordered stretches follow at residues 386 to 419, 442 to 503, and 550 to 570; these read FEES…PTAA, RVPR…SSDT, and SAEK…SGPA. Residues 398–407 are compositionally biased toward low complexity; it reads AARSYSCSAP. Ser493 is modified (phosphoserine). Ser574 bears the Phosphoserine mark. 2 disordered regions span residues 597 to 620 and 645 to 668; these read KAPD…WGRP and GRRL…ETGL. The span at 655 to 668 shows a compositional bias: polar residues; sequence HSLSLNGGSRETGL.

This sequence belongs to the ENTREP family. As to quaternary structure, may interact with WWOX. Widely expressed.

It localises to the membrane. This chain is Protein ENTREP3, found in Homo sapiens (Human).